Consider the following 131-residue polypeptide: Outer membrane protein assembly factor BamE (131 aa).

The first 16 residues, 1–16 (MRNLLLVAAVALSTAG), serve as a signal peptide directing secretion. A lipid anchor (N-palmitoyl cysteine) is attached at Cys17. Residue Cys17 is the site of S-diacylglycerol cysteine attachment. Positions 112–131 (SAPKQFGRNLARDKKKQRGR) are disordered.

It belongs to the BamE family. As to quaternary structure, part of the Bam complex.

The protein resides in the cell outer membrane. Functionally, part of the outer membrane protein assembly complex, which is involved in assembly and insertion of beta-barrel proteins into the outer membrane. The protein is Outer membrane protein assembly factor BamE of Xanthomonas campestris pv. campestris (strain ATCC 33913 / DSM 3586 / NCPPB 528 / LMG 568 / P 25).